The primary structure comprises 26 residues: Coenzyme PQQ synthesis protein A (26 aa).

The pyrroloquinoline quinone (Glu-Tyr) cross-link spans 16–20 (EINMY).

It belongs to the PqqA family.

The protein operates within cofactor biosynthesis; pyrroloquinoline quinone biosynthesis. Its function is as follows. Required for coenzyme pyrroloquinoline quinone (PQQ) biosynthesis. PQQ is probably formed by cross-linking a specific glutamate to a specific tyrosine residue and excising these residues from the peptide. The chain is Coenzyme PQQ synthesis protein A from Cereibacter sphaeroides (strain ATCC 17029 / ATH 2.4.9) (Rhodobacter sphaeroides).